The chain runs to 123 residues: 13 kDa major membrane protein (123 aa).

The protein localises to the cell membrane. In Francisella tularensis subsp. holarctica (strain LVS), this protein is 13 kDa major membrane protein.